The following is a 180-amino-acid chain: Large ribosomal subunit protein uL5 (180 aa).

Belongs to the universal ribosomal protein uL5 family. Part of the 50S ribosomal subunit; part of the 5S rRNA/L5/L18/L25 subcomplex. Contacts the 5S rRNA and the P site tRNA. Forms a bridge to the 30S subunit in the 70S ribosome.

Its function is as follows. This is one of the proteins that bind and probably mediate the attachment of the 5S RNA into the large ribosomal subunit, where it forms part of the central protuberance. In the 70S ribosome it contacts protein S13 of the 30S subunit (bridge B1b), connecting the 2 subunits; this bridge is implicated in subunit movement. Contacts the P site tRNA; the 5S rRNA and some of its associated proteins might help stabilize positioning of ribosome-bound tRNAs. The sequence is that of Large ribosomal subunit protein uL5 from Ruminiclostridium cellulolyticum (strain ATCC 35319 / DSM 5812 / JCM 6584 / H10) (Clostridium cellulolyticum).